The chain runs to 304 residues: 6-dehydroglucose reductase (304 aa).

3 residues coordinate NADP(+): Trp-28, Arg-29, and Asp-56. The active-site Proton donor is the Tyr-61. D-glucose contacts are provided by Tyr-61, His-133, and Arg-134. Residues Ser-163, Asn-164, Gln-185, Ser-215, Leu-217, Gly-219, Gly-268, Ser-269, Gln-270, and Arg-274 each coordinate NADP(+).

The protein belongs to the aldo/keto reductase family.

It carries out the reaction D-glucose + NADP(+) = 6-dehydro-D-glucose + NADPH + H(+). In terms of biological role, part of the alkanesulfonate monooxygenase (sulfo-ASMO) pathway, a D-sulfoquinovose degradation pathway that enables the complete utilization of all carbons within sulfoquinovose (SQ) with concomitant production of inorganic sulfite. Catalyzes the NADP-dependent reduction of 6-dehydro-D-glucose to D-glucose. Can also catalyze the reversible reaction, the formation of 6-dehydro-D-glucose from D-glucose in the presence of NADP(+). The chain is 6-dehydroglucose reductase from Novosphingobium aromaticivorans (strain ATCC 700278 / DSM 12444 / CCUG 56034 / CIP 105152 / NBRC 16084 / F199).